The primary structure comprises 296 residues: 4-hydroxybenzoate octaprenyltransferase (296 aa).

9 helical membrane passes run 28-48, 52-72, 102-122, 123-140, 146-166, 169-189, 219-239, 241-261, and 275-295; these read PIGI…AGKG, LNTV…GCVI, ALVL…FTNS, TTIW…CYPF, YYPQ…AFTA, GELP…TVGY, VIIL…GSRF, LGAF…WEFW, and FLHN…DYAL.

This sequence belongs to the UbiA prenyltransferase family. The cofactor is Mg(2+).

Its subcellular location is the cell inner membrane. It carries out the reaction all-trans-octaprenyl diphosphate + 4-hydroxybenzoate = 4-hydroxy-3-(all-trans-octaprenyl)benzoate + diphosphate. The protein operates within cofactor biosynthesis; ubiquinone biosynthesis. Functionally, catalyzes the prenylation of para-hydroxybenzoate (PHB) with an all-trans polyprenyl group. Mediates the second step in the final reaction sequence of ubiquinone-8 (UQ-8) biosynthesis, which is the condensation of the polyisoprenoid side chain with PHB, generating the first membrane-bound Q intermediate 3-octaprenyl-4-hydroxybenzoate. The sequence is that of 4-hydroxybenzoate octaprenyltransferase from Pseudomonas syringae pv. tomato (strain ATCC BAA-871 / DC3000).